Consider the following 551-residue polypeptide: Scaffold protein D13 ortholog (551 aa).

It belongs to the poxviridae protein D13 family. In terms of assembly, homotrimer. Self-assembles to form a layer. Interacts with A17 (via N-terminus); this interaction is necessary for D13 association with membranes.

The protein localises to the membrane. Its function is as follows. Scaffold protein which forms a transitory spherical honeycomb lattice providing curvature and rigidity to the convex membrane of crescent and immature virions (IV). This association occurs concomitantly with viral membrane formation. Targeted by the drug rifampicin, which prevents the formation of this lattice, and hence virus morphogenesis. In the presence of rifampicin, irregularly shaped membranes that lack the honeycomb layer accumulate around areas of electron-dense viroplasm. This layer is lost from virions during maturation from IV to mature virion (MV), through the proteolysis of A17 N-terminus. The chain is Scaffold protein D13 ortholog from Sus scrofa (Pig).